Reading from the N-terminus, the 146-residue chain is Ribonuclease H (146 aa).

Residues 1–143 enclose the RNase H type-1 domain; that stretch reads MQKKVTIYTD…CDYLATQAIK (143 aa). Residues aspartate 10, glutamate 48, aspartate 70, and aspartate 135 each coordinate Mg(2+).

The protein belongs to the RNase H family. Monomer. Mg(2+) is required as a cofactor.

Its subcellular location is the cytoplasm. It catalyses the reaction Endonucleolytic cleavage to 5'-phosphomonoester.. Endonuclease that specifically degrades the RNA of RNA-DNA hybrids. This Chlorobium phaeobacteroides (strain BS1) protein is Ribonuclease H.